Consider the following 120-residue polypeptide: Large ribosomal subunit protein bL19 (120 aa).

Belongs to the bacterial ribosomal protein bL19 family.

Its function is as follows. This protein is located at the 30S-50S ribosomal subunit interface and may play a role in the structure and function of the aminoacyl-tRNA binding site. This chain is Large ribosomal subunit protein bL19, found in Chlorobium phaeobacteroides (strain DSM 266 / SMG 266 / 2430).